Consider the following 1953-residue polypeptide: Putative surface-exposed virulence protein BigA (1953 aa).

A signal peptide spans 1–27; it reads MNPMQKKKLISIAIALTLQSYYIPAIA. Disordered stretches follow at residues 31-50, 88-258, and 1496-1517; these read NDDE…EKRA, GGGD…TFSN, and TTAP…PQQL. A 1; truncated repeat occupies 101–103; the sequence is PDN. Residues 101 to 252 are 15 X 11 AA tandem repeats; that stretch reads PDNGGDVTPP…DDDDTPPDDS (152 aa). The stretch at 104-113 is one 2; truncated repeat; that stretch reads GGDVTPPDDG. A 3; truncated repeat occupies 114-122; the sequence is GNVTPPDDG. A run of 11 repeats spans residues 123–133, 134–144, 145–155, 156–166, 167–177, 178–188, 189–199, 200–210, 211–221, 222–232, and 233–243. Composition is skewed to acidic residues over residues 141–177 and 185–249; these read DSGD…DSGD and DSGD…DTPP. The 15; truncated repeat unit spans residues 244–252; it reads DDDTPPDDS. The Autotransporter domain occupies 1649 to 1952; that stretch reads SGAQATTVFR…GFMLNVKKTF (304 aa).

The protein is Putative surface-exposed virulence protein BigA (bigA) of Salmonella typhimurium (strain LT2 / SGSC1412 / ATCC 700720).